The primary structure comprises 362 residues: Protein Tob1 (362 aa).

The Bipartite nuclear localization signal signature appears at 22–39 (RRRVNIFGEELERLLKKK). The tract at residues 82-92 (VRGNLPQDLSV) is important for nuclear localization. A compositionally biased stretch (low complexity) spans 144-160 (DPASSVSSSPSPPFGHS). Residues 144 to 171 (DPASSVSSSPSPPFGHSAAVSPTFMPRS) form a disordered region. The interval 161 to 220 (AAVSPTFMPRSTQPLTFTTATFAATKFGSTKMKNSGRSSKVARTSPINLGLTVNVNDLLK) is required for interaction with CPEB3. T204 is modified (phosphothreonine). The Nuclear export signal signature appears at 228–236 (VHSLYGLGL). Residues 234 to 284 (LGLGSQQQPQPQPQQQQQQQPSSSQPPPPLPQQQQQQPQQQQQQQQQTSAL) are disordered. Low complexity-rich tracts occupy residues 238–256 (SQQQ…QPSS) and 265–280 (QQQQ…QQQQ).

This sequence belongs to the BTG family. In terms of assembly, interacts with ERBB2. Interacts with CNOT7. Interacts with CPEB3 (via C-terminal RNA-binding region); recruits CNOT7 to CPEB3 to form a ternary complex required for mRNA deadenylation and decay. Interacts with CNOT8. Interacts with CPEB4. Post-translationally, phosphorylated on Ser and Thr residues. In terms of tissue distribution, ubiquitous.

Its subcellular location is the cytoplasm. The protein resides in the nucleus. Functionally, anti-proliferative protein; the function is mediated by association with deadenylase subunits of the CCR4-NOT complex. Mediates CPEB3-accelerated mRNA deadenylation by binding to CPEB3 and recruiting CNOT7 which leads to target mRNA deadenylation and decay. This Mus musculus (Mouse) protein is Protein Tob1 (Tob1).